Here is a 572-residue protein sequence, read N- to C-terminus: Phosphoglucomutase-2 (572 aa).

Substrate contacts are provided by residues Thr23, Arg27, 126–127 (SH), and Lys140. The Phosphoserine intermediate role is filled by Ser126. Mg(2+) is bound at residue Ser126. Residues Asp308, Asp310, and Asp312 each coordinate Mg(2+). Substrate is bound by residues 312-313 (DR), Thr373, 392-394 (EES), Lys405, and Arg527.

Belongs to the phosphohexose mutase family. It depends on Mg(2+) as a cofactor. Post-translationally, phosphorylated via a calcium-dependent protein kinase.

It localises to the cytoplasm. The catalysed reaction is alpha-D-glucose 1-phosphate = alpha-D-glucose 6-phosphate. Its function is as follows. May be involved in membrane fusion in exocytosis. The chain is Phosphoglucomutase-2 (pp63-2) from Paramecium tetraurelia.